The sequence spans 100 residues: Small ribosomal subunit protein uS14 (100 aa).

This sequence belongs to the universal ribosomal protein uS14 family. In terms of assembly, part of the 30S ribosomal subunit. Contacts proteins S3 and S10.

Its function is as follows. Binds 16S rRNA, required for the assembly of 30S particles and may also be responsible for determining the conformation of the 16S rRNA at the A site. The protein is Small ribosomal subunit protein uS14 of Prochlorococcus marinus (strain AS9601).